The following is a 314-amino-acid chain: DNA-directed RNA polymerase subunit alpha (314 aa).

The alpha N-terminal domain (alpha-NTD) stretch occupies residues 1-228 (MIEIEKPRIE…EHLNIFVDLT (228 aa)). The segment at 245 to 314 (KEKVLEMSIE…DLGLGLRKED (70 aa)) is alpha C-terminal domain (alpha-CTD).

It belongs to the RNA polymerase alpha chain family. Homodimer. The RNAP catalytic core consists of 2 alpha, 1 beta, 1 beta' and 1 omega subunit. When a sigma factor is associated with the core the holoenzyme is formed, which can initiate transcription.

The enzyme catalyses RNA(n) + a ribonucleoside 5'-triphosphate = RNA(n+1) + diphosphate. Functionally, DNA-dependent RNA polymerase catalyzes the transcription of DNA into RNA using the four ribonucleoside triphosphates as substrates. The chain is DNA-directed RNA polymerase subunit alpha from Macrococcus caseolyticus (strain JCSC5402) (Macrococcoides caseolyticum).